A 136-amino-acid polypeptide reads, in one-letter code: Glycine-rich RNA-binding protein 4, mitochondrial (136 aa).

Residues 1-33 constitute a mitochondrion transit peptide; that stretch reads MAFCNKLSGILRQGVSQSSNGPVTSMLGSLRYM. Residues 35 to 113 enclose the RRM domain; sequence SKLFVGGLSW…RQIRVNLATE (79 aa). Ser43 carries the phosphoserine modification. A disordered region spans residues 113 to 136; that stretch reads ERSSAPRSSFGGGGGYGGGGGGGY. A compositionally biased stretch (gly residues) spans 122-136; sequence FGGGGGYGGGGGGGY. A glycine-rich (GR) required for cell-to-cell movement region spans residues 123-135; that stretch reads GGGGGYGGGGGGG.

This sequence belongs to the GR-RBP family. As to quaternary structure, binds to small phloem-mobile single-stranded RNAs (ss-sRNA, e.g. small interfering RNA (siRNA) and microRNA (miRNA)) in the phloeme exudate, including viral-derived sRNA (vsiRNA). As to expression, abundantly expressed in young plants, root tips, and flowers, but weakly in mature leaves and stems, implying highly expression in actively proliferating organs.

It localises to the mitochondrion. It is found in the secreted. Its function is as follows. Possibly has a role in RNA transcription or processing during stress. Binds sequence non-specifically to RNAs and DNAs. Mediates cell-to-cell trafficking of RNA interference (RNAi) signals (small RNAs (sRNA), e.g. small interfering RNA (siRNA) and microRNA (miRNA)) which regulate growth and development, as well as responses to environmental inputs, including pathogen attack; can compromise zucchini yellow mosaic virus (ZYMV) and tobacco rattle virus (TRV) infections at the early stage. In Arabidopsis thaliana (Mouse-ear cress), this protein is Glycine-rich RNA-binding protein 4, mitochondrial.